A 173-amino-acid polypeptide reads, in one-letter code: Crossover junction endodeoxyribonuclease RuvC (173 aa).

Catalysis depends on residues Asp8, Glu67, and Asp139. The Mg(2+) site is built by Asp8, Glu67, and Asp139.

It belongs to the RuvC family. Homodimer which binds Holliday junction (HJ) DNA. The HJ becomes 2-fold symmetrical on binding to RuvC with unstacked arms; it has a different conformation from HJ DNA in complex with RuvA. In the full resolvosome a probable DNA-RuvA(4)-RuvB(12)-RuvC(2) complex forms which resolves the HJ. Mg(2+) serves as cofactor.

The protein resides in the cytoplasm. The enzyme catalyses Endonucleolytic cleavage at a junction such as a reciprocal single-stranded crossover between two homologous DNA duplexes (Holliday junction).. The RuvA-RuvB-RuvC complex processes Holliday junction (HJ) DNA during genetic recombination and DNA repair. Endonuclease that resolves HJ intermediates. Cleaves cruciform DNA by making single-stranded nicks across the HJ at symmetrical positions within the homologous arms, yielding a 5'-phosphate and a 3'-hydroxyl group; requires a central core of homology in the junction. The consensus cleavage sequence is 5'-(A/T)TT(C/G)-3'. Cleavage occurs on the 3'-side of the TT dinucleotide at the point of strand exchange. HJ branch migration catalyzed by RuvA-RuvB allows RuvC to scan DNA until it finds its consensus sequence, where it cleaves and resolves the cruciform DNA. The sequence is that of Crossover junction endodeoxyribonuclease RuvC from Yersinia pseudotuberculosis serotype O:1b (strain IP 31758).